The sequence spans 460 residues: Zinc transporter 6 (460 aa).

At 1 to 33 the chain is on the cytoplasmic side; that stretch reads MGTIHLFRKPQRSFFGKLLQEFRLVAADRRSWK. Residues 34–54 form a helical membrane-spanning segment; the sequence is ILLFGAINVLCTGFLLMWCSS. At 55-64 the chain is on the extracellular side; that stretch reads TNSIALTAYT. A helical membrane pass occupies residues 65–85; sequence YLTIFDLFSLITCLISYWVMM. Over 86–98 the chain is Cytoplasmic; the sequence is RKPSPVYSFGFER. A helical membrane pass occupies residues 99 to 119; the sequence is LEVLAVFASTVLAQLGALFIL. The Extracellular segment spans residues 120–134; sequence KESAERFLEQPEIHT. The helical transmembrane segment at 135-155 threads the bilayer; that stretch reads GRLLVGTFVALSFNLFTMLSI. Topologically, residues 156-200 are cytoplasmic; it reads RNKPFAYVSEAASTSWLQEHVADLSRSLCGLIPGLSSIFLPRMNP. The chain crosses the membrane as a helical span at residues 201-221; that stretch reads FVLIDLAGAFALCITYMLIEI. Topologically, residues 222-223 are extracellular; that stretch reads NN. Residues 224-244 traverse the membrane as a helical segment; that stretch reads YFAVDTASAIAIALMTFGTMY. Topologically, residues 245–460 are cytoplasmic; that stretch reads PMSVYSGKVL…GINRMGQPRP (216 aa). Residues 371-390 are disordered; it reads TPVTSTPAKPSSPPPEFSFN.

It belongs to the cation diffusion facilitator (CDF) transporter (TC 2.A.4) family. SLC30A subfamily. As to quaternary structure, heterodimer with SLC30A5; form a functional zinc ion transmembrane transporter. Expressed in brain and liver, and to a lower extent also in lung. Highly expressed in brain (at protein level).

It localises to the golgi apparatus. It is found in the trans-Golgi network membrane. Functionally, has probably no intrinsic transporter activity but together with SLC30A5 forms a functional zinc ion:proton antiporter heterodimer, mediating zinc entry into the lumen of organelles along the secretory pathway. As part of that zinc ion:proton antiporter, contributes to zinc ion homeostasis within the early secretory pathway and regulates the activation and folding of enzymes like alkaline phosphatases and enzymes involved in phosphatidylinositol glycan anchor biosynthesis. This Mus musculus (Mouse) protein is Zinc transporter 6 (Slc30a6).